An 89-amino-acid chain; its full sequence is Small ribosomal subunit protein uS15 (89 aa).

This sequence belongs to the universal ribosomal protein uS15 family. In terms of assembly, part of the 30S ribosomal subunit. Forms a bridge to the 50S subunit in the 70S ribosome, contacting the 23S rRNA.

Functionally, one of the primary rRNA binding proteins, it binds directly to 16S rRNA where it helps nucleate assembly of the platform of the 30S subunit by binding and bridging several RNA helices of the 16S rRNA. Forms an intersubunit bridge (bridge B4) with the 23S rRNA of the 50S subunit in the ribosome. This is Small ribosomal subunit protein uS15 from Pseudomonas entomophila (strain L48).